The following is a 540-amino-acid chain: ADP,ATP carrier protein 2 (540 aa).

12 helical membrane passes run 23-43, 61-81, 93-113, 150-170, 185-205, 222-242, 292-312, 334-354, 361-381, 389-409, 455-475, and 477-497; these read FSKF…YALL, VIPF…TMIY, VFIS…TVIY, LYYV…FWGV, ALIN…SLWL, EVLL…LYLY, LLGI…FEVV, ITTL…GQTI, IGAL…FGAI, MIFG…LGGV, SGGS…AASL, and AITI…AWLG.

This sequence belongs to the ADP/ATP translocase tlc family.

Its subcellular location is the cell membrane. In Chlamydia trachomatis serovar D (strain ATCC VR-885 / DSM 19411 / UW-3/Cx), this protein is ADP,ATP carrier protein 2 (tlcB).